Here is a 139-residue protein sequence, read N- to C-terminus: MIIGIGTDLANIERIERTLERFGDRFRHRVFTEREQRKADSRQQTAATYAKRWAAKEACSKALGTGLRMGISWRDMAVQNLETGQPTMYVTGWAAERLKQLTPEGHEAVIHVSLTDDHPWAQAYVVISAIPLEAAARSA.

Positions 8 and 57 each coordinate Mg(2+).

Belongs to the P-Pant transferase superfamily. AcpS family. Mg(2+) serves as cofactor.

The protein resides in the cytoplasm. The catalysed reaction is apo-[ACP] + CoA = holo-[ACP] + adenosine 3',5'-bisphosphate + H(+). Functionally, transfers the 4'-phosphopantetheine moiety from coenzyme A to a Ser of acyl-carrier-protein. The chain is Holo-[acyl-carrier-protein] synthase from Dinoroseobacter shibae (strain DSM 16493 / NCIMB 14021 / DFL 12).